The following is a 374-amino-acid chain: Gibberellin 3-beta-dioxygenase 1 (374 aa).

In terms of domain architecture, Fe2OG dioxygenase spans 206–307 (KACAALQLNS…RFSVAYLYGP (102 aa)). Fe cation is bound by residues histidine 231, aspartate 233, and histidine 288. Arginine 298 is a catalytic residue. Position 298 (arginine 298) interacts with 2-oxoglutarate.

The protein belongs to the iron/ascorbate-dependent oxidoreductase family. GA3OX subfamily. L-ascorbate serves as cofactor. It depends on Fe(2+) as a cofactor. As to expression, expressed in radicles, roots, internodes, cotyledons, leaves and shoots. Barely detected in developing seeds. Not detected in flowers or young fruits.

The enzyme catalyses gibberellin A20 + 2-oxoglutarate + O2 = gibberellin A1 + succinate + CO2. It participates in plant hormone biosynthesis; gibberellin biosynthesis. Its function is as follows. Converts the inactive gibberellin (GA) precursors GA9 and GA20 in the bioactives gibberellins GA4 and GA1. Has a small activity on GA29, producing GA8. Unable to convert GA20 to GA5, GA5 to GA3 or GA12 to GA14. Involved in the production of bioactive GA for vegetative growth and development, but not for the 3-beta-hydroxylation of GA in developing seeds. This chain is Gibberellin 3-beta-dioxygenase 1 (LE), found in Pisum sativum (Garden pea).